Consider the following 184-residue polypeptide: Mitochondrial translation release factor in rescue (184 aa).

Residues 1–98 (MSSRSTWALL…HVPSGIVVKC (98 aa)) constitute a mitochondrion transit peptide. Residues 60–124 (ESELEEQFVK…LQEKVDVFYN (65 aa)) form a GGQ domain region. A GGQ motif is present at residues 74 to 76 (GGQ). Glutamine 76 carries the post-translational modification N5-methylglutamine. Residues 130-178 (VHKEKLEAERRKRERKKRAKETLEKKKLLKELREASQNITEKKADADGI) adopt a coiled-coil conformation. Residues 132–184 (KEKLEAERRKRERKKRAKETLEKKKLLKELREASQNITEKKADADGIPRGFQE) are disordered. Residues 149–184 (KETLEKKKLLKELREASQNITEKKADADGIPRGFQE) are compositionally biased toward basic and acidic residues.

This sequence belongs to the prokaryotic/mitochondrial release factor family. Interacts (via C-terminus) with MTRES1 (via S4 domain). Associates with mitoribosomal S39 large subunit, peptidyl tRNA and nascent chain. Methylation of glutamine in the GGQ triplet by HEMK1.

It is found in the mitochondrion. Part of a mitoribosome-associated quality control pathway that prevents aberrant translation by responding to interruptions during elongation. As heterodimer with MTRES1, ejects the unfinished nascent chain and peptidyl transfer RNA (tRNA), respectively, from stalled ribosomes. Recruitment of mitoribosome biogenesis factors to these quality control intermediates suggests additional roles for MTRES1 and MTRF during mitoribosome rescue. The chain is Mitochondrial translation release factor in rescue from Mus musculus (Mouse).